The primary structure comprises 297 residues: Nucleotide-binding protein BMA10229_A1510 (297 aa).

8 to 15 provides a ligand contact to ATP; the sequence is GISGSGKS. Position 57–60 (57–60) interacts with GTP; the sequence is DARS.

The protein belongs to the RapZ-like family.

Displays ATPase and GTPase activities. This chain is Nucleotide-binding protein BMA10229_A1510, found in Burkholderia mallei (strain NCTC 10229).